A 656-amino-acid polypeptide reads, in one-letter code: uncharacterized protein (656 aa).

This is an uncharacterized protein from Rickettsia prowazekii (strain Madrid E).